The following is a 74-amino-acid chain: Putative defensin-like protein 36 (74 aa).

The signal sequence occupies residues 1–22 (MASNKVSFFLVLCLCILLAGEC). Cystine bridges form between Cys33–Cys59, Cys45–Cys69, and Cys49–Cys71.

Belongs to the DEFL family.

Its subcellular location is the secreted. The polypeptide is Putative defensin-like protein 36 (Arabidopsis thaliana (Mouse-ear cress)).